The chain runs to 392 residues: Formate-dependent phosphoribosylglycinamide formyltransferase (392 aa).

Residues 22–23 (EL) and Glu-82 each bind N(1)-(5-phospho-beta-D-ribosyl)glycinamide. ATP-binding positions include Arg-114, Lys-155, 160–165 (SSGKGQ), 195–198 (EGVV), and Glu-203. One can recognise an ATP-grasp domain in the interval 119 to 308 (RLAAEELGLP…EFALHVRAFL (190 aa)). Positions 267 and 279 each coordinate Mg(2+). Residues Asp-286, Lys-355, and 362–363 (RR) contribute to the N(1)-(5-phospho-beta-D-ribosyl)glycinamide site.

This sequence belongs to the PurK/PurT family. Homodimer.

The enzyme catalyses N(1)-(5-phospho-beta-D-ribosyl)glycinamide + formate + ATP = N(2)-formyl-N(1)-(5-phospho-beta-D-ribosyl)glycinamide + ADP + phosphate + H(+). It functions in the pathway purine metabolism; IMP biosynthesis via de novo pathway; N(2)-formyl-N(1)-(5-phospho-D-ribosyl)glycinamide from N(1)-(5-phospho-D-ribosyl)glycinamide (formate route): step 1/1. In terms of biological role, involved in the de novo purine biosynthesis. Catalyzes the transfer of formate to 5-phospho-ribosyl-glycinamide (GAR), producing 5-phospho-ribosyl-N-formylglycinamide (FGAR). Formate is provided by PurU via hydrolysis of 10-formyl-tetrahydrofolate. This chain is Formate-dependent phosphoribosylglycinamide formyltransferase, found in Cronobacter sakazakii (strain ATCC BAA-894) (Enterobacter sakazakii).